A 1364-amino-acid polypeptide reads, in one-letter code: Serine protease EatA (1364 aa).

Positions 1–56 (MNKVFSLKYSFLAKGFIAVSELARRVSVKGKLKSASSIIISPITIAIVSYAPPSLA) are cleaved as a signal peptide. The region spanning 57 to 307 (ATVNADISYQ…VVTTQDFLHQ (251 aa)) is the Peptidase S6 domain. Catalysis depends on charge relay system residues H134, D162, and S267. One can recognise an Autotransporter domain in the interval 1098-1364 (DSQGDAGGWA…SINANFRYYF (267 aa)).

In terms of processing, cleaved to release the mature protein from the outer membrane.

It localises to the periplasm. The protein resides in the secreted. It is found in the cell surface. Its subcellular location is the cell outer membrane. Its activity is regulated as follows. Inhibited by phenylmethylsulfonyl fluoride. Its function is as follows. Autotransporter serine protease probably involved in virulence. The protein is Serine protease EatA (eatA) of Escherichia coli O78:H11 (strain H10407 / ETEC).